Here is a 545-residue protein sequence, read N- to C-terminus: Phenylalanine--tRNA ligase beta subunit (545 aa).

In terms of domain architecture, B5 spans 270 to 346 (LEPKERLLTT…KGYGYENIKV (77 aa)). The Mg(2+) site is built by Asp-324, Asp-330, Glu-333, and Asp-334.

The protein belongs to the phenylalanyl-tRNA synthetase beta subunit family. Type 2 subfamily. As to quaternary structure, tetramer of two alpha and two beta subunits. The cofactor is Mg(2+).

The protein resides in the cytoplasm. The catalysed reaction is tRNA(Phe) + L-phenylalanine + ATP = L-phenylalanyl-tRNA(Phe) + AMP + diphosphate + H(+). The protein is Phenylalanine--tRNA ligase beta subunit of Methanosarcina acetivorans (strain ATCC 35395 / DSM 2834 / JCM 12185 / C2A).